Consider the following 179-residue polypeptide: Large ribosomal subunit protein uL5 (179 aa).

This sequence belongs to the universal ribosomal protein uL5 family. As to quaternary structure, part of the 50S ribosomal subunit; part of the 5S rRNA/L5/L18/L25 subcomplex. Contacts the 5S rRNA and the P site tRNA. Forms a bridge to the 30S subunit in the 70S ribosome.

Functionally, this is one of the proteins that bind and probably mediate the attachment of the 5S RNA into the large ribosomal subunit, where it forms part of the central protuberance. In the 70S ribosome it contacts protein S13 of the 30S subunit (bridge B1b), connecting the 2 subunits; this bridge is implicated in subunit movement. Contacts the P site tRNA; the 5S rRNA and some of its associated proteins might help stabilize positioning of ribosome-bound tRNAs. The sequence is that of Large ribosomal subunit protein uL5 from Staphylococcus haemolyticus (strain JCSC1435).